Reading from the N-terminus, the 99-residue chain is uncharacterized protein (99 aa).

The interval 50 to 77 (SAHWEDARSSGGTSPIRARAGSEGRGCQ) is disordered.

This is an uncharacterized protein from Homo sapiens (Human).